The chain runs to 796 residues: Volume-regulated anion channel subunit LRRC8E (796 aa).

The Cytoplasmic portion of the chain corresponds to 1–22 (MIPVAEFKQFTEQQPAFKVLKP). The helical transmembrane segment at 23–43 (WWDVLAEYLTVAMLMIGVFGC) threads the bilayer. Residues 44 to 116 (TLQVTQDKII…YETALHWYAK (73 aa)) lie on the Extracellular side of the membrane. A disulfide bridge connects residues Cys-54 and Cys-301. A glycan (N-linked (GlcNAc...) asparagine) is linked at Asn-63. A helical transmembrane segment spans residues 117-137 (YFPYLVVIHTLIFMVCTSFWF). Over 138-265 (KFPGTSSKIE…IRQTVLKVCK (128 aa)) the chain is Cytoplasmic. A helical transmembrane segment spans residues 266-286 (FLAILVYNLVYVEKISFLVAC). Over 287-313 (RVETSEVTGYASFCCNHTKAHLFSKLA) the chain is Extracellular. N-linked (GlcNAc...) asparagine glycosylation is present at Asn-302. Residues 314-334 (FCYISFVCIYGLTCIYTLYWL) traverse the membrane as a helical segment. Residues 335–796 (FHRPLKEYSF…AEVRDKMEEE (462 aa)) lie on the Cytoplasmic side of the membrane. LRR repeat units follow at residues 508 to 529 (GLEELHLEGLFPQELARAATLE), 536 to 557 (QLKVLSLRSNAGKVPASVTDVA), 559 to 579 (HLQRLSLHNDGARLVALNSLK), 583 to 604 (ALRELELVACGLERIPHAVFSL), 606 to 627 (ALQELDLKDNHLRSIEEILSFQ), 631 to 652 (KLVTLRLWHNQIAYVPEHVRKL), 654 to 675 (SLEQLYLSYNKLETLPSQLGLC), 677 to 698 (GLRLLDVSHNGLHSLPPEVGLL), 700 to 721 (NLQHLALSYNALEALPEELFFC), 723 to 744 (KLRTLLLGDNQLSQLSPHVGAL), and 746 to 767 (ALSRLELKGNRLEALPEELGNC).

It belongs to the LRRC8 family. As to quaternary structure, heterohexamer; oligomerizes with other LRRC8 proteins (LRRC8A, LRRC8C, LRRC8D and/or LRRC8B) to form a heterohexamer. In vivo, the subunit composition may depend primarily on expression levels, and heterooligomeric channels containing various proportions of the different LRRC8 proteins may coexist.

The protein resides in the cell membrane. It localises to the endoplasmic reticulum membrane. It is found in the lysosome membrane. It carries out the reaction chloride(in) = chloride(out). The catalysed reaction is iodide(out) = iodide(in). The enzyme catalyses taurine(out) = taurine(in). It catalyses the reaction 2',3'-cGAMP(out) = 2',3'-cGAMP(in). In terms of biological role, non-essential component of the volume-regulated anion channel (VRAC, also named VSOAC channel), an anion channel required to maintain a constant cell volume in response to extracellular or intracellular osmotic changes. The VRAC channel conducts iodide better than chloride and can also conduct organic osmolytes like taurine. Mediates efflux of amino acids, such as aspartate, in response to osmotic stress. The VRAC channel also mediates transport of immunoreactive cyclic dinucleotide GMP-AMP (2'-3'-cGAMP), an immune messenger produced in response to DNA virus in the cytosol. Channel activity requires LRRC8A plus at least one other family member (LRRC8B, LRRC8C, LRRC8D or LRRC8E); channel characteristics depend on the precise subunit composition. Also plays a role in lysosome homeostasis by forming functional lysosomal VRAC channels in response to low cytoplasmic ionic strength condition: lysosomal VRAC channels are necessary for the formation of large lysosome-derived vacuoles, which store and then expel excess water to maintain cytosolic water homeostasis. This is Volume-regulated anion channel subunit LRRC8E from Homo sapiens (Human).